A 120-amino-acid polypeptide reads, in one-letter code: Large ribosomal subunit protein uL18 (120 aa).

It belongs to the universal ribosomal protein uL18 family. In terms of assembly, part of the 50S ribosomal subunit; part of the 5S rRNA/L5/L18/L25 subcomplex. Contacts the 5S and 23S rRNAs.

This is one of the proteins that bind and probably mediate the attachment of the 5S RNA into the large ribosomal subunit, where it forms part of the central protuberance. This Methylobacterium sp. (strain 4-46) protein is Large ribosomal subunit protein uL18.